Reading from the N-terminus, the 152-residue chain is Deoxyuridine 5'-triphosphate nucleotidohydrolase (152 aa).

Substrate contacts are provided by residues 71–73, asparagine 84, 88–90, and methionine 98; these read RSG and LID.

Belongs to the dUTPase family. It depends on Mg(2+) as a cofactor.

It catalyses the reaction dUTP + H2O = dUMP + diphosphate + H(+). Its pathway is pyrimidine metabolism; dUMP biosynthesis; dUMP from dCTP (dUTP route): step 2/2. Functionally, this enzyme is involved in nucleotide metabolism: it produces dUMP, the immediate precursor of thymidine nucleotides and it decreases the intracellular concentration of dUTP so that uracil cannot be incorporated into DNA. The polypeptide is Deoxyuridine 5'-triphosphate nucleotidohydrolase (Salmonella agona (strain SL483)).